A 358-amino-acid chain; its full sequence is Probable branched-chain-amino-acid aminotransferase (358 aa).

Lys196 is subject to N6-(pyridoxal phosphate)lysine.

The protein belongs to the class-IV pyridoxal-phosphate-dependent aminotransferase family. Requires pyridoxal 5'-phosphate as cofactor.

The catalysed reaction is L-leucine + 2-oxoglutarate = 4-methyl-2-oxopentanoate + L-glutamate. It catalyses the reaction L-isoleucine + 2-oxoglutarate = (S)-3-methyl-2-oxopentanoate + L-glutamate. It carries out the reaction L-valine + 2-oxoglutarate = 3-methyl-2-oxobutanoate + L-glutamate. The protein operates within amino-acid biosynthesis; L-isoleucine biosynthesis; L-isoleucine from 2-oxobutanoate: step 4/4. Its pathway is amino-acid biosynthesis; L-leucine biosynthesis; L-leucine from 3-methyl-2-oxobutanoate: step 4/4. It participates in amino-acid biosynthesis; L-valine biosynthesis; L-valine from pyruvate: step 4/4. In terms of biological role, acts on leucine, isoleucine and valine. This is Probable branched-chain-amino-acid aminotransferase (ilvE) from Staphylococcus epidermidis (strain ATCC 12228 / FDA PCI 1200).